The following is a 440-amino-acid chain: Armadillo-like helical domain containing protein 1 (440 aa).

This Homo sapiens (Human) protein is Armadillo-like helical domain containing protein 1.